We begin with the raw amino-acid sequence, 62 residues long: Amolopin-p-MT1 (62 aa).

A signal peptide spans 1 to 22 (MFTLKKSLLLLFFLGTISLSLC). Positions 23-42 (EQERGADEEENGGEVTEEEV) are cleaved as a propeptide — removed in mature form.

This sequence belongs to the frog skin active peptide (FSAP) family. Brevinin subfamily. Expressed by the skin glands.

The protein resides in the secreted. Functionally, antimicrobial peptide. Active against a variety of Gram-negative and Gram-positive bacterial strains. Not active against fungi. Shows weak hemolytic activity against human erythrocytes. This Amolops mantzorum (Sichuan torrent frog) protein is Amolopin-p-MT1.